The sequence spans 136 residues: Large ribosomal subunit protein uL16c (136 aa).

The protein belongs to the universal ribosomal protein uL16 family. As to quaternary structure, part of the 50S ribosomal subunit.

It localises to the plastid. The protein localises to the chloroplast. The chain is Large ribosomal subunit protein uL16c from Illicium oligandrum (Star anise).